The sequence spans 392 residues: MSSPEKKRKTTKKPSPTPQSTTPNPSLPDDLVVSCLARVSRLYYPTLSLVSKSFRSLIASPDLYKTRSLLGRTESCLYVCLQEKDSDPNPRWFTLCLKPNRTLTNDITEKKKKKKKKKKMSSGYVLAAIPVLHSRPAYWSGLVAVGSNIYNIGGPIDKAHSSIVSVLDCQSHTWHEGPGMRVERRYPAANVVEGKIYVTGGCKDCSNSSNWMEVFDPRTQTWESVSSPGAEIGGCSIHKSAVVEGEILIANSHGLIYKPKEGRWERMKWDMDIGWVWYSYCVVENVLYYYYKGVFKWYDTMARLWRDLKGVKGLPRFARCGGKMADYGGKMAVFWDKIVTSDDGCKNKMILCAVIALERRNSEEIWGKVEWHDAVLTVPLSYEVVYALSPTV.

Positions 1–12 are enriched in basic residues; it reads MSSPEKKRKTTK. The tract at residues 1-27 is disordered; that stretch reads MSSPEKKRKTTKKPSPTPQSTTPNPSL. Residues 18–27 are compositionally biased toward low complexity; that stretch reads PQSTTPNPSL. Positions 21–67 constitute an F-box domain; sequence TTPNPSLPDDLVVSCLARVSRLYYPTLSLVSKSFRSLIASPDLYKTR. Kelch repeat units follow at residues 148–194, 195–242, and 244–285; these read NIYN…VVEG, KIYV…KSAV, and EGEI…VVEN.

In terms of assembly, part of a SCF (ASK-cullin-F-box) protein ligase complex. Interacts with ASK13 and ASK14.

Its pathway is protein modification; protein ubiquitination. Its function is as follows. Component of SCF(ASK-cullin-F-box) E3 ubiquitin ligase complexes, which may mediate the ubiquitination and subsequent proteasomal degradation of target proteins. The sequence is that of F-box/kelch-repeat protein At4g39550 from Arabidopsis thaliana (Mouse-ear cress).